We begin with the raw amino-acid sequence, 317 residues long: Cell division protein FtsQ (317 aa).

At 1 to 63 (MDGGGRFVFA…RIHIPAHTGT (63 aa)) the chain is on the cytoplasmic side. A helical transmembrane segment spans residues 64–82 (ISAVAFYAMIGLYGMSLGG). Topologically, residues 83–317 (HTNIVTQTTT…KALKKAEKNT (235 aa)) are periplasmic. The 69-residue stretch at 97 to 165 (FAVEDVKVSG…KTVEVRLKER (69 aa)) folds into the POTRA domain.

This sequence belongs to the FtsQ/DivIB family. FtsQ subfamily.

The protein localises to the cell inner membrane. In terms of biological role, essential cell division protein. The polypeptide is Cell division protein FtsQ (Agrobacterium fabrum (strain C58 / ATCC 33970) (Agrobacterium tumefaciens (strain C58))).